A 329-amino-acid chain; its full sequence is Deoxynucleotidyltransferase terminal-interacting protein 1 (329 aa).

The disordered stretch occupies residues 1-27; the sequence is MGATGDVEQPRGPGGAERGGPELGDAG. A compositionally biased stretch (gly residues) spans 12–22; the sequence is GPGGAERGGPE. The tract at residues 56–147 is important for dimerization; that stretch reads MTTSFTDPAI…RLTHELPGIK (92 aa). Positions 159–173 form a DNA-binding region, a.T hook; sequence RGSPIPKKRKGRPPG. Position 161 is a phosphoserine (Ser161). Positions 164 to 170 match the Nuclear localization signal motif; the sequence is PKKRKGR. Residues 197-316 form an important for DNA and nucleosome binding region; the sequence is REGPKWDPAR…MRKYMETLRT (120 aa). Residues 216-237 constitute a DNA-binding region (H-T-H motif); that stretch reads GSRANKALGMGGTRGRIYIKHP.

As to quaternary structure, monomer and homodimer. A minor proportion may form homotrimers. Interacts with ZNF541. Interacts with the terminal deoxynucleotidyltransferase DNTT. Interacts with TRERF1. Identified in a histone deacetylase complex that contains DNTTIP1, HDAC1 and MIDEAS; this complex assembles into a tetramer that contains four copies of each protein chain. Component of a histone deacetylase complex containing DNTTIP1, ZNF541, HDAC1 and HDAC2. Identified in a complex with KCTD19, HDAC1, HDAC2 and ZNF541.

Its subcellular location is the nucleus. Functionally, increases DNTT terminal deoxynucleotidyltransferase activity (in vitro). Also acts as a transcriptional regulator, binding to the consensus sequence 5'-GNTGCATG-3' following an AT-tract. Associates with RAB20 promoter and positively regulates its transcription. Binds DNA and nucleosomes; may recruit HDAC1 complexes to nucleosomes or naked DNA. In Bos taurus (Bovine), this protein is Deoxynucleotidyltransferase terminal-interacting protein 1 (DNTTIP1).